The primary structure comprises 258 residues: MLILISPAKTLDYQSPLTTMRYTLPELLDNSQQLIHEARKLTPPQISTLMRISDKLAGINAARFHDWQPDFTPENARQAILAFKGDVYTGLQAETFSEDDFDFAQQHLRMLSGLYGVLRPLDLMQPYRLEMGIRLENARGKDLYQFWGDIITNKLNEALAAQGDNVVINLASDEYFKSVKPKKLNAEIIKPVFLDEKNGKFKIISFYAKKARGLMSRFIIENRLTKPEQLTGFNSEGYFFDEDSSSNGELVFKRYEQR.

This sequence belongs to the UPF0246 family.

This chain is UPF0246 protein YaaA, found in Escherichia coli O8 (strain IAI1).